A 391-amino-acid chain; its full sequence is Casein kinase II subunit alpha (391 aa).

Residues 36 to 41 (QDDYQL) form an interaction with beta subunit region. Residues 39 to 324 (YQLVRKLGRG…AREAMEHPYF (286 aa)) form the Protein kinase domain. ATP is bound by residues 45–53 (LGRGKYSEV) and lysine 68. Residue aspartate 156 is the Proton acceptor of the active site. 2 positions are modified to phosphothreonine; by CDK1: threonine 344 and threonine 360. Phosphoserine; by CDK1 is present on residues serine 362 and serine 370.

It belongs to the protein kinase superfamily. Ser/Thr protein kinase family. CK2 subfamily. In terms of assembly, heterotetramer composed of two catalytic subunits (alpha chain and/or alpha' chain) and two regulatory subunits (beta chains). The tetramer can exist as a combination of 2 alpha/2 beta, 2 alpha'/2 beta or 1 alpha/1 alpha'/2 beta subunits. Also part of a CK2-SPT16-SSRP1 complex composed of SSRP1, SUPT16H, CSNK2A1, CSNK2A2 and CSNK2B, which forms following UV irradiation. Interacts with RNPS1. Interacts with SNAI1. Interacts with PML. Interacts with CCAR2. Interacts with HIRIP3. In terms of processing, phosphorylated at Thr-344, Thr-360, Ser-362 and Ser-370 by CDK1 in prophase and metaphase and dephosphorylated during anaphase. Phosphorylation does not directly affect casein kinase 2 activity, but may contribute to its regulation by forming binding sites for interacting proteins and/or targeting it to different compartments.

Its subcellular location is the nucleus. It carries out the reaction L-seryl-[protein] + ATP = O-phospho-L-seryl-[protein] + ADP + H(+). The catalysed reaction is L-threonyl-[protein] + ATP = O-phospho-L-threonyl-[protein] + ADP + H(+). Constitutively active protein kinase whose activity is not directly affected by phosphorylation. Seems to be regulated by level of expression and localization. Catalytic subunit of a constitutively active serine/threonine-protein kinase complex that phosphorylates a large number of substrates containing acidic residues C-terminal to the phosphorylated serine or threonine. Regulates numerous cellular processes, such as cell cycle progression, apoptosis and transcription, as well as viral infection. May act as a regulatory node which integrates and coordinates numerous signals leading to an appropriate cellular response. During mitosis, functions as a component of the p53/TP53-dependent spindle assembly checkpoint (SAC) that maintains cyclin-B-CDK1 activity and G2 arrest in response to spindle damage. Also required for p53/TP53-mediated apoptosis, phosphorylating 'Ser-392' of p53/TP53 following UV irradiation. Phosphorylates a number of DNA repair proteins in response to DNA damage, such as MDC1, MRE11, RAD9A, RAD51 and HTATSF1, promoting their recruitment to DNA damage sites. Can also negatively regulate apoptosis. Phosphorylates the caspases CASP9 and CASP2 and the apoptotic regulator NOL3. Phosphorylation protects CASP9 from cleavage and activation by CASP8, and inhibits the dimerization of CASP2 and activation of CASP8. Phosphorylates YY1, protecting YY1 from cleavage by CASP7 during apoptosis. Regulates transcription by direct phosphorylation of RNA polymerases I, II, III and IV. Also phosphorylates and regulates numerous transcription factors including NF-kappa-B, STAT1, CREB1, IRF1, IRF2, ATF1, ATF4, SRF, MAX, JUN, FOS, MYC and MYB. Phosphorylates Hsp90 and its co-chaperones FKBP4 and CDC37, which is essential for chaperone function. Mediates sequential phosphorylation of FNIP1, promoting its gradual interaction with Hsp90, leading to activate both kinase and non-kinase client proteins of Hsp90. Regulates Wnt signaling by phosphorylating CTNNB1 and the transcription factor LEF1. Acts as an ectokinase that phosphorylates several extracellular proteins. Phosphorylates PML at 'Ser-565' and primes it for ubiquitin-mediated degradation. Plays an important role in the circadian clock function by phosphorylating BMAL1 at 'Ser-90' which is pivotal for its interaction with CLOCK and which controls CLOCK nuclear entry. Phosphorylates FMR1, promoting FMR1-dependent formation of a membraneless compartment. May phosphorylate histone H2A on 'Ser-1'. The polypeptide is Casein kinase II subunit alpha (CSNK2A1) (Oryctolagus cuniculus (Rabbit)).